We begin with the raw amino-acid sequence, 694 residues long: MKFENLLIEIGTEELPPKSLRTLADSFLANFSDELVKADLPFTAATWYAAPRRLALSITGLAVAQADKVVEKRGPAVSSAFDADGNPTKAAQGWARGNGITVEQAERLVTDKGEWLVHQAKVVGVQTNSLIAAMAQRALDKLPIPKPMRWGANSTQFIRPVHTVTMLLGSELIGGELLGIKSDRIIRGHRFMGQASFQLDHADNYLSALKEQGKVLADYQLRKAIIKADAEAAAAKIGGVADIQEDLLEEVASLVEWPIVLTASFEEKFLNVPAEALVYTMKGDQKYFPVFDKSGKLLPNFIFVTNIESKDPQQIISGNEKVVRPRLADAEFFFNTDKKHSLASRLSSLETVVFQKQLGTLKARAERISQLAGFIATELNNNNLASSSVDAARAGLLSKADLMTNMVMEFTDTQGTMGMHYARLDGETEAVAIAIEEQYKPKFSGDTVPTASVSCAVALAEKLDTLVGIFGIGQAPKGAADPFALRRAAIGILRIIVENKLPLDLVDLIAKAQALHGTNLTNGNTSEDVLEFLMARFRSWYQDKGIQVDVILAVLARRPTRPADFDSRVNAVSHFRGLEASTALAAANKRVSNILAKVEGELPANVTPSLLTETAEKALAEQLASLQPKLAPLFATGDYQQALTLLAELRESVDQFFEDVMVMADDEALKNNRLALLNNLREQFLHVADISLLQ.

Belongs to the class-II aminoacyl-tRNA synthetase family. Tetramer of two alpha and two beta subunits.

It localises to the cytoplasm. It catalyses the reaction tRNA(Gly) + glycine + ATP = glycyl-tRNA(Gly) + AMP + diphosphate. The sequence is that of Glycine--tRNA ligase beta subunit from Shewanella denitrificans (strain OS217 / ATCC BAA-1090 / DSM 15013).